We begin with the raw amino-acid sequence, 222 residues long: Protein MKS1 (222 aa).

Residues 1-61 (MDPSEYFAGG…PNRDQPPPYI (61 aa)) are disordered. Positions 12–21 (PSDQQNQKRQ) are enriched in polar residues. Phosphoserine is present on S30. The span at 37–46 (DSHKIKKPPK) shows a compositional bias: basic residues. Residues 47 to 61 (HPAPPPNRDQPPPYI) show a composition bias toward pro residues. S72 carries the post-translational modification Phosphoserine. Residues 83-92 (FMNVVQRLTG) carry the VQ motif. The interval 105-130 (GDVSPAARLASTENASPRGGKEPAAR) is disordered. Phosphoserine occurs at positions 108 and 120.

As to quaternary structure, interacts with MPK4, WRKY25 and WRKY33. Phosphorylated on serine residue by MPK4.

Its subcellular location is the nucleus. Its function is as follows. Regulator of plant defense response. May contribute to MPK4-regulated defense activation by coupling the kinase to specific WRKY transcription factors. The protein is Protein MKS1 (MKS1) of Arabidopsis thaliana (Mouse-ear cress).